The following is a 364-amino-acid chain: Probable dual-specificity RNA methyltransferase RlmN (364 aa).

Glutamate 107 acts as the Proton acceptor in catalysis. Residues 113–346 (HDYGNSVCVT…ATIRREQGSD (234 aa)) form the Radical SAM core domain. Cysteine 120 and cysteine 351 are oxidised to a cystine. The [4Fe-4S] cluster site is built by cysteine 127, cysteine 131, and cysteine 134. S-adenosyl-L-methionine is bound by residues 177–178 (GE), serine 209, 232–234 (SLH), and asparagine 308. The active-site S-methylcysteine intermediate is cysteine 351.

It belongs to the radical SAM superfamily. RlmN family. It depends on [4Fe-4S] cluster as a cofactor.

The protein resides in the cytoplasm. The catalysed reaction is adenosine(2503) in 23S rRNA + 2 reduced [2Fe-2S]-[ferredoxin] + 2 S-adenosyl-L-methionine = 2-methyladenosine(2503) in 23S rRNA + 5'-deoxyadenosine + L-methionine + 2 oxidized [2Fe-2S]-[ferredoxin] + S-adenosyl-L-homocysteine. It carries out the reaction adenosine(37) in tRNA + 2 reduced [2Fe-2S]-[ferredoxin] + 2 S-adenosyl-L-methionine = 2-methyladenosine(37) in tRNA + 5'-deoxyadenosine + L-methionine + 2 oxidized [2Fe-2S]-[ferredoxin] + S-adenosyl-L-homocysteine. Its function is as follows. Specifically methylates position 2 of adenine 2503 in 23S rRNA and position 2 of adenine 37 in tRNAs. Confers resistance to some classes of antibiotics. The protein is Probable dual-specificity RNA methyltransferase RlmN of Staphylococcus aureus (strain bovine RF122 / ET3-1).